We begin with the raw amino-acid sequence, 355 residues long: MGGKTFMLMAGGTGGHIFPALAVADSLRARGHHVIWLGSKDSMEERIVPQYGIRLETLAIKGVRGNGIKRKLMLPVTLYQTVREAQRIIRKHRVECVIGFGGFVTFPGGLAAKLLGVPIVIHEQNAVAGLSNRHLSRWAKRVLYAFPKAFSHEGGLVGNPVRADISNLPVPAERFQGREGRLKILVVGGSLGADVLNKTVPQALALLPDDARPQMYHQSGRGKLGSLQADYDALGVKAECVEFITDMVSAYRDADLVICRAGALTIAELTAAGLGALLVPYPHAVDDHQTANARFMVQAEAGLLLPQTQLTAEKLAEILGSLNREKCLKWAENARTLALPHSADDVAEAAIACAA.

UDP-N-acetyl-alpha-D-glucosamine-binding positions include 13–15 (TGG), N125, R162, S190, I244, and Q289.

This sequence belongs to the glycosyltransferase 28 family. MurG subfamily.

The protein localises to the cell inner membrane. The catalysed reaction is di-trans,octa-cis-undecaprenyl diphospho-N-acetyl-alpha-D-muramoyl-L-alanyl-D-glutamyl-meso-2,6-diaminopimeloyl-D-alanyl-D-alanine + UDP-N-acetyl-alpha-D-glucosamine = di-trans,octa-cis-undecaprenyl diphospho-[N-acetyl-alpha-D-glucosaminyl-(1-&gt;4)]-N-acetyl-alpha-D-muramoyl-L-alanyl-D-glutamyl-meso-2,6-diaminopimeloyl-D-alanyl-D-alanine + UDP + H(+). The protein operates within cell wall biogenesis; peptidoglycan biosynthesis. In terms of biological role, cell wall formation. Catalyzes the transfer of a GlcNAc subunit on undecaprenyl-pyrophosphoryl-MurNAc-pentapeptide (lipid intermediate I) to form undecaprenyl-pyrophosphoryl-MurNAc-(pentapeptide)GlcNAc (lipid intermediate II). The polypeptide is UDP-N-acetylglucosamine--N-acetylmuramyl-(pentapeptide) pyrophosphoryl-undecaprenol N-acetylglucosamine transferase (Neisseria meningitidis serogroup C / serotype 2a (strain ATCC 700532 / DSM 15464 / FAM18)).